Here is a 639-residue protein sequence, read N- to C-terminus: Immunoglobulin-like domain-containing receptor 2 (639 aa).

Residues 1 to 20 (MDRVLLRWISLFWLTAMVEG) form the signal peptide. An Ig-like V-type domain is found at 21–162 (LQVTVPDKKK…LEGKNEDSVE (142 aa)). Residues 21 to 186 (LQVTVPDKKK…PSFAVEIMPE (166 aa)) are Lumenal-facing. A disulfide bridge connects residues C42 and C145. The chain crosses the membrane as a helical span at residues 187–207 (WVFVGLVLLGVFLFFVLVGIC). Residues 208 to 639 (WCQCCPHSCC…DFPTRMSLVV (432 aa)) are Cytoplasmic-facing. Disordered stretches follow at residues 273–295 (LMDKPHPPPLAPSDSTGGSHSVR), 374–415 (WSGV…MLSR), and 437–639 (YGQR…SLVV). 2 stretches are compositionally biased toward basic and acidic residues: residues 393–414 (YNKEDRESFRHSQPRSKSEMLS) and 442–464 (RRADGNSHEARGGSRFERSESRA). S473 carries the phosphoserine modification. Residues 483–493 (RSREPLTDADR) show a composition bias toward basic and acidic residues. The residue at position 544 (R544) is an Omega-N-methylarginine. At S579 the chain carries Phosphoserine. Residues 606 to 617 (RGRDLPYHSNSE) are compositionally biased toward basic and acidic residues.

This sequence belongs to the immunoglobulin superfamily. LISCH7 family. As to quaternary structure, interacts with MARVELD2 and OCLN. Interacts with P4HB AND HSPA5; the interaction with HSPA5 stabilizes ILDR2 expression. Interacts (via C-terminus) with TRA2A, TRA2B and SRSF1. As to expression, expressed in testis, brain, pituitary, colon, heart, nerves, prostate, esophagus, lung liver and small intestine. Highly expressed in macrophages, also expressed in monocytes and at low levels in NK and NKT cells (at protein level).

It localises to the endoplasmic reticulum membrane. Its subcellular location is the cell junction. The protein resides in the tight junction. It is found in the nucleus. In terms of biological role, may be involved in ER stress pathways with effects on lipid homeostasis and insulin secretion. With ILDR1 and LSR, involved in the maintain of the epithelial barrier function through the recruitment of MARVELD2/tricellulin to tricellular tight junctions. Also functions as a B7-like protein family member expressed on immune cells and inflamed tissue and with T-cell inhibitory activity. In the inner ear, may regulate alternative pre-mRNA splicing via binding to TRA2A, TRA2B and SRSF1. This chain is Immunoglobulin-like domain-containing receptor 2, found in Homo sapiens (Human).